Reading from the N-terminus, the 577-residue chain is Moesin (577 aa).

One can recognise an FERM domain in the interval 2–295; sequence PKTISVRVTT…GNHELYMRRR (294 aa). Residue Ser74 is modified to Phosphoserine. Lys79 is subject to N6-acetyllysine. Lys83 is modified (N6-succinyllysine). The [IL]-x-C-x-x-[DE] motif motif lies at 115–120; sequence IYCPPE. Tyr116 bears the Phosphotyrosine mark. At Cys117 the chain carries S-nitrosocysteine. N6-acetyllysine is present on residues Lys139 and Lys165. Disordered regions lie at residues 322 to 342, 358 to 453, and 468 to 549; these read LLENEKKKRELAEKEKEKIER, TKKA…QMVQ, and STPH…AENM. The segment covering 358–401 has biased composition (basic and acidic residues); that stretch reads TKKAQQELEEQTRRALELEQERKRAQSEAEKLAKERQEAEEAKE. A Phosphoserine modification is found at Ser407. Basic and acidic residues-rich tracts occupy residues 438 to 447 and 492 to 519; these read KESEAEECHQ and AELRADAMAKDRSEEERTTEAEKNERVQ. Ser527 bears the Phosphoserine mark. Residues 531-549 are compositionally biased toward basic and acidic residues; the sequence is NARDESKKTTNDMIHAENM. Thr558 bears the Phosphothreonine; by ROCK2 and STK10 mark.

In resting T-cells, part of a PAG1-NHERF1-MSN complex which is disrupted upon TCR activation. Interacts with NHERF1. Interacts with PPP1R16B. Interacts with PDZD8. Interacts with SELPLG and SYK; these interactions mediate the activation of SYK by SELPLG. Interacts with PDPN (via cytoplasmic domain); this interaction activates RHOA and promotes epithelial-mesenchymal transition. Interacts with SPN/CD43 cytoplasmic tail. Interacts with CD44. Interacts with ICAM2. Interacts with ICAM3 (via C-terminus). Interacts with PDZD8. Interacts with F-actin. Interacts with CD46. Interacts with PTPN6. Post-translationally, phosphorylation on Thr-558 is crucial for the formation of microvilli-like structures. Phosphorylation by ROCK2 suppresses the head-to-tail association of the N-terminal and C-terminal halves resulting in an opened conformation which is capable of actin and membrane-binding. Phosphorylation on Thr-558 by STK10 negatively regulates lymphocyte migration and polarization. In terms of processing, S-nitrosylation of Cys-117 is induced by interferon-gamma and oxidatively-modified low-densitity lipoprotein (LDL(ox)) implicating the iNOS-S100A8/9 transnitrosylase complex.

It is found in the cell membrane. Its subcellular location is the cytoplasm. It localises to the cytoskeleton. The protein resides in the apical cell membrane. The protein localises to the cell projection. It is found in the microvillus membrane. Its subcellular location is the microvillus. Its activity is regulated as follows. A head-to-tail association, of the N-terminal and C-terminal halves results in a closed conformation (inactive form) which is incapable of actin or membrane-binding. Functionally, ezrin-radixin-moesin (ERM) family protein that connects the actin cytoskeleton to the plasma membrane and thereby regulates the structure and function of specific domains of the cell cortex. Tethers actin filaments by oscillating between a resting and an activated state providing transient interactions between moesin and the actin cytoskeleton. Once phosphorylated on its C-terminal threonine, moesin is activated leading to interaction with F-actin and cytoskeletal rearrangement. These rearrangements regulate many cellular processes, including cell shape determination, membrane transport, and signal transduction. The role of moesin is particularly important in immunity acting on both T and B-cells homeostasis and self-tolerance, regulating lymphocyte egress from lymphoid organs. Modulates phagolysosomal biogenesis in macrophages. Participates also in immunologic synapse formation. The polypeptide is Moesin (Rattus norvegicus (Rat)).